Reading from the N-terminus, the 268-residue chain is Small ribosomal subunit protein uS10m (268 aa).

A mitochondrion-targeting transit peptide spans 1–64; that stretch reads MIIRPVVRSL…RITTTTEAPK (64 aa).

The protein belongs to the universal ribosomal protein uS10 family. Component of the mitochondrial small ribosomal subunit (mt-SSU). Mature N.crassa 74S mitochondrial ribosomes consist of a small (37S) and a large (54S) subunit. The 37S small subunit contains a 16S ribosomal RNA (16S mt-rRNA) and 32 different proteins. The 54S large subunit contains a 23S rRNA (23S mt-rRNA) and 42 different proteins.

The protein resides in the mitochondrion. Its function is as follows. Component of the mitochondrial ribosome (mitoribosome), a dedicated translation machinery responsible for the synthesis of mitochondrial genome-encoded proteins, including at least some of the essential transmembrane subunits of the mitochondrial respiratory chain. The mitoribosomes are attached to the mitochondrial inner membrane and translation products are cotranslationally integrated into the membrane. This chain is Small ribosomal subunit protein uS10m (mrp-10), found in Neurospora crassa (strain ATCC 24698 / 74-OR23-1A / CBS 708.71 / DSM 1257 / FGSC 987).